Here is a 318-residue protein sequence, read N- to C-terminus: 2-keto-3-deoxygluconate permease (318 aa).

10 consecutive transmembrane segments (helical) span residues 10–30 (LPGG…TLWP), 42–62 (GLIS…GATI), 82–102 (IAVA…GGIP), 109–129 (LSVL…YAAL), 139–159 (AGAV…LILG), 163–183 (LATF…LGFA), 201–221 (TLVP…TIVH), 224–244 (ASGV…LLLA), 257–277 (VAAS…AGMA), and 288–308 (TALV…LTAL).

The protein belongs to the KdgT transporter family.

The protein localises to the cell inner membrane. The enzyme catalyses 2-dehydro-3-deoxy-D-gluconate(in) + H(+)(in) = 2-dehydro-3-deoxy-D-gluconate(out) + H(+)(out). Its function is as follows. Catalyzes the proton-dependent uptake of 2-keto-3-deoxygluconate (KDG) into the cell. The polypeptide is 2-keto-3-deoxygluconate permease (Xanthomonas oryzae pv. oryzae (strain MAFF 311018)).